Reading from the N-terminus, the 289-residue chain is Serine/threonine-protein phosphatase Pgam5, mitochondrial (289 aa).

The helical transmembrane segment at 7-23 (FVCGTGAGLAVYYLQRL) threads the bilayer.

This sequence belongs to the phosphoglycerate mutase family. BPG-dependent PGAM subfamily. As to quaternary structure, interacts with Pk92B/ASK1.

Its subcellular location is the mitochondrion outer membrane. The enzyme catalyses O-phospho-L-seryl-[protein] + H2O = L-seryl-[protein] + phosphate. It carries out the reaction O-phospho-L-threonyl-[protein] + H2O = L-threonyl-[protein] + phosphate. Displays phosphatase activity for serine/threonine residues, and dephosphorylates and activates Pk92B kinase. Has apparently no phosphoglycerate mutase activity. The polypeptide is Serine/threonine-protein phosphatase Pgam5, mitochondrial (Drosophila erecta (Fruit fly)).